Consider the following 308-residue polypeptide: Olfactory receptor 5H8 (308 aa).

At 1–28 (MDDENATLLTEFVLTGLTYQSEWKIPLF) the chain is on the extracellular side. The helical transmembrane segment at 29–49 (LAFLVIYLITIMANLGLIAVI) threads the bilayer. Residues 50–56 (WKDSHLH) are Cytoplasmic-facing. Residues 57–77 (IPMYLFLGSLAFVDAWLSSSV) form a helical membrane-spanning segment. Residues 78-98 (TPKMLISFLAKSMIISVSECK) lie on the Extracellular side of the membrane. A disulfide bond links cysteine 97 and cysteine 179. Residues 99–119 (IQFFSFGISGTTECFLLATMA) form a helical membrane-spanning segment. The Cytoplasmic segment spans residues 120-133 (YDRYVAICKPLLYP). Residues 134-154 (VIMTNGLCIWLLVLSFIGGFL) traverse the membrane as a helical segment. Residues 155–195 (HALIHEGILFRLTFCNSNIIHHFYCDIIPLLKISCTDPSIN) lie on the Extracellular side of the membrane. A helical transmembrane segment spans residues 196–216 (FLMLFILSGSIQVFTILTVLV). The Cytoplasmic portion of the chain corresponds to 217–238 (SYTFVLFTILKKKAKDIRKAFS). Residues 239-259 (TCGAHLLSVSLYYGPLLFMYV) traverse the membrane as a helical segment. Residues 260–270 (HPASPQADDQD) are Extracellular-facing. The chain crosses the membrane as a helical span at residues 271–291 (MVESLFYTVIIPFLNPIIYSL). The Cytoplasmic segment spans residues 292-308 (RNKQVIDSLTKTLKGNV).

Belongs to the G-protein coupled receptor 1 family.

The protein localises to the cell membrane. Odorant receptor. The chain is Olfactory receptor 5H8 from Homo sapiens (Human).